A 258-amino-acid polypeptide reads, in one-letter code: MPRGGSEDQKVYVGNLPGDVREKEVEDIFHKYGRIKYVDIKSGRGPAFAFVEFEDHRDAEDAVRARDGYEFDGRRIRVEFTRGVGPRGPGGRPLQDGGDHRGGDFRGGRGGGRGGGPQRRTGYRVIVEGLPPTGSWQDLKDHMRDAGDVCYADVARDGTGVVEFTRYEDVKYAVRKLDDTKFRSHEGETAYIRVREDNSSGGGSGGGGRDRSRSRSPRAERRASPKYSPRRSRSRSRSRSRSRSRSASRSPSRSPSPQ.

Positions 9 to 83 (QKVYVGNLPG…RRIRVEFTRG (75 aa)) constitute an RRM 1 domain. 2 disordered regions span residues 81 to 120 (TRGV…PQRR) and 190 to 258 (AYIR…PSPQ). Residues 97–107 (GGDHRGGDFRG) show a composition bias toward basic and acidic residues. Residues 108–117 (GRGGGRGGGP) are compositionally biased toward gly residues. In terms of domain architecture, RRM 2 spans 123–197 (YRVIVEGLPP…ETAYIRVRED (75 aa)). Residues 208 to 223 (GRDRSRSRSPRAERRA) are compositionally biased toward basic and acidic residues. A compositionally biased stretch (basic residues) spans 228–246 (SPRRSRSRSRSRSRSRSRS). The span at 247–258 (ASRSPSRSPSPQ) shows a compositional bias: low complexity.

It belongs to the splicing factor SR family. Interacts with spk-1. Post-translationally, directly phosphorylated by spk-1 in vitro on serine residues of the RS domain. As to expression, predominantly coexpressed with spk-1 in adult hermaphrodite germlines.

It is found in the nucleus. Its function is as follows. Plays an essential role in embryogenesis. In Caenorhabditis elegans, this protein is Probable splicing factor, arginine/serine-rich 3 (rsp-3).